A 264-amino-acid chain; its full sequence is Thiazole synthase (264 aa).

Catalysis depends on lysine 106, which acts as the Schiff-base intermediate with DXP. 1-deoxy-D-xylulose 5-phosphate is bound by residues glycine 167, 193–194 (AG), and 215–216 (NT).

It belongs to the ThiG family. In terms of assembly, homotetramer. Forms heterodimers with either ThiH or ThiS.

It is found in the cytoplasm. The catalysed reaction is [ThiS sulfur-carrier protein]-C-terminal-Gly-aminoethanethioate + 2-iminoacetate + 1-deoxy-D-xylulose 5-phosphate = [ThiS sulfur-carrier protein]-C-terminal Gly-Gly + 2-[(2R,5Z)-2-carboxy-4-methylthiazol-5(2H)-ylidene]ethyl phosphate + 2 H2O + H(+). It functions in the pathway cofactor biosynthesis; thiamine diphosphate biosynthesis. In terms of biological role, catalyzes the rearrangement of 1-deoxy-D-xylulose 5-phosphate (DXP) to produce the thiazole phosphate moiety of thiamine. Sulfur is provided by the thiocarboxylate moiety of the carrier protein ThiS. In vitro, sulfur can be provided by H(2)S. The sequence is that of Thiazole synthase from Xylella fastidiosa (strain Temecula1 / ATCC 700964).